The chain runs to 164 residues: UPF0304 protein CKO_00501 (164 aa).

It belongs to the UPF0304 family.

This chain is UPF0304 protein CKO_00501, found in Citrobacter koseri (strain ATCC BAA-895 / CDC 4225-83 / SGSC4696).